A 422-amino-acid chain; its full sequence is Tyrosine-protein kinase STYK1 (422 aa).

Residues 26 to 46 (VIIVPTLLVTIFLILLGVILW) form a helical membrane-spanning segment. The 271-residue stretch at 114 to 384 (SEVLEQICSG…ELRLRLEAAI (271 aa)) folds into the Protein kinase domain. Residues 120 to 128 (ICSGSCGPI) and Lys-147 contribute to the ATP site. Catalysis depends on Asp-251, which acts as the Proton acceptor.

The protein belongs to the protein kinase superfamily. Tyr protein kinase family. As to expression, widely expressed. Highly expressed in brain, placenta and prostate. Expressed in tumor cells such as hepatoma cells L-02, cervix carcinoma cells HeLa, ovary cancer cells Ho8910 and chronic myelogenous leukemia cells K-562, but not in other tumor cells such as epidermoid carcinoma (A-431). Undetectable in most normal lung tissues, widely expressed in lung cancers.

It localises to the membrane. It catalyses the reaction L-tyrosyl-[protein] + ATP = O-phospho-L-tyrosyl-[protein] + ADP + H(+). Probable tyrosine protein-kinase, which has strong transforming capabilities on a variety of cell lines. When overexpressed, it can also induce tumor cell invasion as well as metastasis in distant organs. May act by activating both MAP kinase and phosphatidylinositol 3'-kinases (PI3K) pathways. The chain is Tyrosine-protein kinase STYK1 (STYK1) from Homo sapiens (Human).